We begin with the raw amino-acid sequence, 832 residues long: Conserved oligomeric Golgi complex subunit 5 (832 aa).

Composition is skewed to pro residues over residues 1–11 and 23–38; these read MALPPSSPSPS and NPPP…PPQT. The disordered stretch occupies residues 1 to 49; sequence MALPPSSPSPSSPSLQRLSTFKNPPPSSLSSGAPPPQTPSSSSSSPLDS. The span at 39 to 49 shows a compositional bias: low complexity; sequence PSSSSSSPLDS.

This sequence belongs to the COG5 family. As to quaternary structure, homodimer. Component of the conserved oligomeric Golgi complex which is composed of eight different subunits and is required for normal Golgi morphology and localization. Interacts with COG3, COG6, COG7 and COG8.

The protein resides in the golgi apparatus membrane. In terms of biological role, required for normal Golgi function. The sequence is that of Conserved oligomeric Golgi complex subunit 5 from Arabidopsis thaliana (Mouse-ear cress).